The sequence spans 476 residues: MGIKFLEVIKPFCAVLPEIQKPERKIQFREKVLWTAITLFIFLVCCQIPLFGIMSSDSADPFYWMRVILASNRGTLMELGISPIVTSGLIMQLLAGAKIIEVGDTPKDRALFNGAQKLFGMIITIGQAIVYVMTGMYGDPSDMGAGICLLIIIQLFVAGLIVLLLDELLQKGYGLGSGISLFIATNICETIVWKAFSPTTVNTGRGTEFEGAIIALFHLLATRTDKVRALREAFYRQNLPNLMNLLATVFVFGVVIYFQGFRVDLPIKSARYRGQYNTYPIKLFYTSNIPIILQSALVSNLYVISQMLSTRFSGNFLVNLLGTWSDTSSGGPARAYPVGGLCYYFSPPESFGSVLDDPIHAAIYICFMLGSCAFFSKTWIEVSGSSAKDVAKQLKEQQMVMRGHRETSMVHELNRYIPTAAAFGGLCIGGLSVMADFLGAIGSGTGILLAVTIIYQYFEIFVKEQSEMGSMGALLF.

The Cytoplasmic portion of the chain corresponds to G2–L33. The helical transmembrane segment at W34 to I53 threads the bilayer. Topologically, residues M54 to L76 are lumenal. A helical transmembrane segment spans residues M77–G96. Topologically, residues A97–K117 are cytoplasmic. The chain crosses the membrane as a helical span at residues L118–G138. At D139–G144 the chain is on the lumenal side. A helical membrane pass occupies residues A145–L165. At D166–G172 the chain is on the cytoplasmic side. The helical transmembrane segment at Y173–W193 threads the bilayer. Over K194 to P240 the chain is Lumenal. A helical membrane pass occupies residues N241–F261. Over R262 to N288 the chain is Cytoplasmic. Residues I289–S309 form a helical membrane-spanning segment. Residues T310–V354 lie on the Lumenal side of the membrane. Residues L355 to F375 traverse the membrane as a helical segment. Topologically, residues S376–A420 are cytoplasmic. The helical transmembrane segment at A421 to I441 threads the bilayer. Over G442–T445 the chain is Lumenal. A helical membrane pass occupies residues G446–V462. Residues K463–F476 are Cytoplasmic-facing.

Belongs to the SecY/SEC61-alpha family. The SEC61 channel-forming translocon complex consists of channel-forming core components SEC61A1, SEC61B and SEC61G and different auxiliary components such as SEC62 and SEC63.

The protein resides in the endoplasmic reticulum membrane. Its function is as follows. Component of SEC61 channel-forming translocon complex that mediates transport of signal peptide-containing precursor polypeptides across the endoplasmic reticulum (ER). Forms a ribosome receptor and a gated pore in the ER membrane, both functions required for cotranslational translocation of nascent polypeptides. This is Protein transport protein Sec61 subunit alpha isoform B (sec61ab) from Oncorhynchus mykiss (Rainbow trout).